Consider the following 514-residue polypeptide: 2-isopropylmalate synthase (514 aa).

A Pyruvate carboxyltransferase domain is found at 4 to 266; it reads INVFDTSLRD…KTGLKLSELK (263 aa). The Mn(2+) site is built by D13, H201, H203, and N237. The segment at 390-514 is regulatory domain; the sequence is ELTALQVTYG…AKREMAKVES (125 aa).

The protein belongs to the alpha-IPM synthase/homocitrate synthase family. LeuA type 1 subfamily. As to quaternary structure, homodimer. The cofactor is Mn(2+).

It localises to the cytoplasm. The catalysed reaction is 3-methyl-2-oxobutanoate + acetyl-CoA + H2O = (2S)-2-isopropylmalate + CoA + H(+). Its pathway is amino-acid biosynthesis; L-leucine biosynthesis; L-leucine from 3-methyl-2-oxobutanoate: step 1/4. Functionally, catalyzes the condensation of the acetyl group of acetyl-CoA with 3-methyl-2-oxobutanoate (2-ketoisovalerate) to form 3-carboxy-3-hydroxy-4-methylpentanoate (2-isopropylmalate). The protein is 2-isopropylmalate synthase of Shouchella clausii (strain KSM-K16) (Alkalihalobacillus clausii).